Here is a 214-residue protein sequence, read N- to C-terminus: Large ribosomal subunit protein uL3 (214 aa).

The segment covering 130–151 has biased composition (polar residues); sequence FSSNRASHGNSRSHNTPGSIGQ. The interval 130-163 is disordered; the sequence is FSSNRASHGNSRSHNTPGSIGQAQDPGRVFPGKR. An N5-methylglutamine modification is found at glutamine 153.

It belongs to the universal ribosomal protein uL3 family. Part of the 50S ribosomal subunit. Forms a cluster with proteins L14 and L19. In terms of processing, methylated by PrmB.

Its function is as follows. One of the primary rRNA binding proteins, it binds directly near the 3'-end of the 23S rRNA, where it nucleates assembly of the 50S subunit. The sequence is that of Large ribosomal subunit protein uL3 from Chromobacterium violaceum (strain ATCC 12472 / DSM 30191 / JCM 1249 / CCUG 213 / NBRC 12614 / NCIMB 9131 / NCTC 9757 / MK).